A 408-amino-acid polypeptide reads, in one-letter code: Zinc finger and SCAN domain-containing protein 1 (408 aa).

The tract at residues 1-34 (MLPRPKAPASPRRPQTPTPSEQDADPGPASPRDT) is disordered. The region spanning 38–120 (RLRFRQFQYH…SLVEDLTQMC (83 aa)) is the SCAN box domain. Disordered stretches follow at residues 136 to 155 (WSFGEEEDGKSPRSQKEPSQ), 177 to 203 (LETTQLQQSLHTRAEAEAPRAPGLLGS), and 215 to 273 (DEPE…GGTQ). Over residues 177–187 (LETTQLQQSLH) the composition is skewed to polar residues. 2 C2H2-type zinc fingers span residues 292-314 (FQCADCGMVFTWVTHFIEHQKTH) and 320-342 (FPCPECGKVFLHNSVLTEHGKIH). Residues 344–379 (LEPPRKKAPRSKGPRESVPPRDGAQGPVAPRSPKRP) form a disordered region. The C2H2-type 3 zinc-finger motif lies at 380–402 (FQCSVCGKAFPWMVHLIDHQKLH).

The protein localises to the nucleus. May be involved in transcriptional regulation. The chain is Zinc finger and SCAN domain-containing protein 1 (ZSCAN1) from Homo sapiens (Human).